The primary structure comprises 312 residues: Protoheme IX farnesyltransferase 1 (312 aa).

The next 9 membrane-spanning stretches (helical) occupy residues 21–41 (GVLA…LLVT), 53–73 (IPSP…AGSA), 105–125 (SALV…ALGA), 127–147 (LLAA…YTLV), 156–176 (IVWG…AVTG), 182–202 (ALVM…SLAM), 225–245 (VSAR…LLVP), 246–266 (ATSW…LIVA), and 292–312 (LALL…SFVA).

It belongs to the UbiA prenyltransferase family. Protoheme IX farnesyltransferase subfamily.

It localises to the cell membrane. The enzyme catalyses heme b + (2E,6E)-farnesyl diphosphate + H2O = Fe(II)-heme o + diphosphate. It participates in porphyrin-containing compound metabolism; heme O biosynthesis; heme O from protoheme: step 1/1. Functionally, converts heme B (protoheme IX) to heme O by substitution of the vinyl group on carbon 2 of heme B porphyrin ring with a hydroxyethyl farnesyl side group. The sequence is that of Protoheme IX farnesyltransferase 1 from Saccharopolyspora erythraea (strain ATCC 11635 / DSM 40517 / JCM 4748 / NBRC 13426 / NCIMB 8594 / NRRL 2338).